The primary structure comprises 358 residues: Magnesium-protoporphyrin IX monomethyl ester [oxidative] cyclase (358 aa).

The protein belongs to the AcsF family. It depends on Fe cation as a cofactor.

It carries out the reaction Mg-protoporphyrin IX 13-monomethyl ester + 3 NADPH + 3 O2 + 2 H(+) = 3,8-divinyl protochlorophyllide a + 3 NADP(+) + 5 H2O. Its pathway is porphyrin-containing compound metabolism; chlorophyll biosynthesis (light-independent). Catalyzes the formation of the isocyclic ring in chlorophyll biosynthesis. Mediates the cyclase reaction, which results in the formation of divinylprotochlorophyllide (Pchlide) characteristic of all chlorophylls from magnesium-protoporphyrin IX 13-monomethyl ester (MgPMME). The protein is Magnesium-protoporphyrin IX monomethyl ester [oxidative] cyclase of Trichodesmium erythraeum (strain IMS101).